The chain runs to 325 residues: Probable NADH kinase (325 aa).

This sequence belongs to the NAD kinase family. In terms of assembly, homodimer.

Its subcellular location is the cytoplasm. It catalyses the reaction NADH + ATP = ADP + NADPH + H(+). Functionally, key source of the cellular reductant NADPH which is an important antioxidant factor. The chain is Probable NADH kinase from Oryza sativa subsp. japonica (Rice).